Reading from the N-terminus, the 188-residue chain is Acireductone dioxygenase (188 aa).

The interval 1 to 20 is disordered; that stretch reads MSRLRIFADSNPTTPHFDSR. Fe(2+) contacts are provided by H97, H99, E103, and H141. Ni(2+) contacts are provided by H97, H99, E103, and H141.

The protein belongs to the acireductone dioxygenase (ARD) family. As to quaternary structure, monomer. Fe(2+) serves as cofactor. Requires Ni(2+) as cofactor.

It catalyses the reaction 1,2-dihydroxy-5-(methylsulfanyl)pent-1-en-3-one + O2 = 3-(methylsulfanyl)propanoate + CO + formate + 2 H(+). It carries out the reaction 1,2-dihydroxy-5-(methylsulfanyl)pent-1-en-3-one + O2 = 4-methylsulfanyl-2-oxobutanoate + formate + 2 H(+). It participates in amino-acid biosynthesis; L-methionine biosynthesis via salvage pathway; L-methionine from S-methyl-5-thio-alpha-D-ribose 1-phosphate: step 5/6. In terms of biological role, catalyzes 2 different reactions between oxygen and the acireductone 1,2-dihydroxy-3-keto-5-methylthiopentene (DHK-MTPene) depending upon the metal bound in the active site. Fe-containing acireductone dioxygenase (Fe-ARD) produces formate and 2-keto-4-methylthiobutyrate (KMTB), the alpha-ketoacid precursor of methionine in the methionine recycle pathway. Ni-containing acireductone dioxygenase (Ni-ARD) produces methylthiopropionate, carbon monoxide and formate, and does not lie on the methionine recycle pathway. This is Acireductone dioxygenase from Xanthomonas campestris pv. campestris (strain 8004).